The chain runs to 343 residues: MDLSPRHRSILKALVEEFVSDNKPVGSKTLSEKYDIGLSPATIRSCLAELEDMGFIVARHTSGGRVPTERGYRLYVDSLVTLFELTMREKQRIQEEYLRMQFRLDQVLIATSKVLASLSQSASVVLGPEGSLDTLKHIELIHVNGGEVLMILVMRSGTVLNRNIFFDFHISQETLYQISRYLNDNVKGFDVHEIQSNLIPQMMLKKEGPEGFTLFAPSIARAMGTDSHSVDNLYIDGLKNLYENFKDEEEQLENILHLFDEKQFLKEFFSDYVPMDGVYTIIGKDGNEKLGGVTIITTNYRMGEKRIGSMGIIGPQRMNYNKALPLIEFTSKLVSEMITKLSR.

The protein belongs to the HrcA family.

Functionally, negative regulator of class I heat shock genes (grpE-dnaK-dnaJ and groELS operons). Prevents heat-shock induction of these operons. The protein is Heat-inducible transcription repressor HrcA of Leptospira biflexa serovar Patoc (strain Patoc 1 / Ames).